Here is a 212-residue protein sequence, read N- to C-terminus: Probable transaldolase (212 aa).

The active-site Schiff-base intermediate with substrate is the Lys84.

It belongs to the transaldolase family. Type 3B subfamily.

The protein resides in the cytoplasm. It carries out the reaction D-sedoheptulose 7-phosphate + D-glyceraldehyde 3-phosphate = D-erythrose 4-phosphate + beta-D-fructose 6-phosphate. It participates in carbohydrate degradation; pentose phosphate pathway; D-glyceraldehyde 3-phosphate and beta-D-fructose 6-phosphate from D-ribose 5-phosphate and D-xylulose 5-phosphate (non-oxidative stage): step 2/3. Transaldolase is important for the balance of metabolites in the pentose-phosphate pathway. The protein is Probable transaldolase of Bacillus pumilus (strain SAFR-032).